A 471-amino-acid chain; its full sequence is L-lysine 2,3-aminomutase (471 aa).

Positions 120–332 (HRYPDRVLFL…GLRGHTSGYA (213 aa)) constitute a Radical SAM core domain. The [4Fe-4S] cluster site is built by Cys134, Cys138, and Cys141. Lys346 carries the N6-(pyridoxal phosphate)lysine modification.

The protein belongs to the radical SAM superfamily. KamA family. In terms of assembly, homotetramer. [4Fe-4S] cluster serves as cofactor. Requires pyridoxal 5'-phosphate as cofactor.

The enzyme catalyses L-lysine = (3S)-3,6-diaminohexanoate. The protein operates within amino-acid degradation; L-lysine degradation via acetate pathway. Functionally, catalyzes the interconversion of L-alpha-lysine and L-beta-lysine. This is L-lysine 2,3-aminomutase (kamA) from Bacillus subtilis (strain 168).